Consider the following 342-residue polypeptide: Autoinducer 2 import system permease protein LsrC (342 aa).

Residues 1 to 13 lie on the Periplasmic side of the membrane; it reads MLKFIQNNREITA. The chain crosses the membrane as a helical span at residues 14–34; the sequence is LLAVVLLFVLPGFLDRQYLSV. Topologically, residues 35–38 are cytoplasmic; that stretch reads QTLT. Residues 39 to 59 traverse the membrane as a helical segment; that stretch reads MVYSSAQILILLAMGATLVML. The Periplasmic segment spans residues 60-69; sequence TRNIDVSVGS. The helical transmembrane segment at 70–90 threads the bilayer; that stretch reads ITGMCAVLLGMLLNAGYSLPV. The Cytoplasmic segment spans residues 91–92; that stretch reads AC. The helical transmembrane segment at 93 to 113 threads the bilayer; it reads VATLLLGLLAGFFNGVLVAWL. A topological domain (periplasmic) is located at residue lysine 114. The chain crosses the membrane as a helical span at residues 115–135; sequence IPAIVATLGTLGLYRGIMLLW. Residues 136–154 lie on the Cytoplasmic side of the membrane; the sequence is TGGKWIEGLPAELKQLSAP. Residues 155 to 175 form a helical membrane-spanning segment; sequence LLFGVSAIGWLTIILVAFMAW. Over 176 to 212 the chain is Periplasmic; sequence LLAKTAFGRSFYVTGDNLQGARQLGVRTEAIRIVAFS. The helical transmembrane segment at 213 to 233 threads the bilayer; sequence LNGCMAALAGIVFASQIGFIP. The Cytoplasmic portion of the chain corresponds to 234–251; sequence NQTGTGLEMKAIAACVLG. Residues 252 to 272 form a helical membrane-spanning segment; sequence GISLLGGSGAIIGAVLGAWFL. At 273–283 the chain is on the periplasmic side; it reads TQIDSVLVLLR. Residues 284–304 traverse the membrane as a helical segment; it reads IPAWWNDFIAGMVLLAVLVFD. Over 305 to 342 the chain is Cytoplasmic; that stretch reads GRLRCALERNLRRQKYARFMMPPPPVKPASSGKKREAA.

Belongs to the binding-protein-dependent transport system permease family. AraH/RbsC subfamily. In terms of assembly, the complex is composed of two ATP-binding proteins (LsrA), two transmembrane proteins (LsrC and LsrD) and a solute-binding protein (LsrB).

The protein localises to the cell inner membrane. Its function is as follows. Part of the ABC transporter complex LsrABCD involved in autoinducer 2 (AI-2) import. Probably responsible for the translocation of the substrate across the membrane. The sequence is that of Autoinducer 2 import system permease protein LsrC (lsrC) from Escherichia coli (strain SMS-3-5 / SECEC).